The chain runs to 212 residues: uncharacterized protein (212 aa).

A helical membrane pass occupies residues 11 to 31 (NLIFFQFIVYFFFISLTILII).

The protein localises to the membrane. This is an uncharacterized protein from Rickettsia prowazekii (strain Madrid E).